The following is a 389-amino-acid chain: Phosphopentomutase (389 aa).

Residues D10, D282, H287, D323, H324, and H335 each contribute to the Mn(2+) site.

The protein belongs to the phosphopentomutase family. The cofactor is Mn(2+).

The protein resides in the cytoplasm. The catalysed reaction is 2-deoxy-alpha-D-ribose 1-phosphate = 2-deoxy-D-ribose 5-phosphate. It carries out the reaction alpha-D-ribose 1-phosphate = D-ribose 5-phosphate. It participates in carbohydrate degradation; 2-deoxy-D-ribose 1-phosphate degradation; D-glyceraldehyde 3-phosphate and acetaldehyde from 2-deoxy-alpha-D-ribose 1-phosphate: step 1/2. Its function is as follows. Isomerase that catalyzes the conversion of deoxy-ribose 1-phosphate (dRib-1-P) and ribose 1-phosphate (Rib-1-P) to deoxy-ribose 5-phosphate (dRib-5-P) and ribose 5-phosphate (Rib-5-P), respectively. The polypeptide is Phosphopentomutase (Clostridium kluyveri (strain NBRC 12016)).